Consider the following 1592-residue polypeptide: Laminin subunit gamma-1 (1592 aa).

The N-terminal stretch at M1 to A19 is a signal peptide. The region spanning S29–R268 is the Laminin N-terminal domain. 2 N-linked (GlcNAc...) asparagine glycosylation sites follow: N43 and N117. 16 disulfides stabilise this stretch: C269-C278, C271-C288, C290-C299, C302-C322, C325-C334, C327-C350, C353-C362, C365-C378, C381-C393, C383-C399, C401-C410, C413-C425, C428-C439, C430-C446, C448-C457, and C460-C475. 4 consecutive Laminin EGF-like domains span residues C269–P324, C325–A380, C381–P427, and C428–P477. Positions S504 to I672 constitute a Laminin IV type A domain. N-linked (GlcNAc...) asparagine glycosylation is found at N559 and N633. 24 disulfide bridges follow: C707-C716, C709-C723, C725-C734, C737-C753, C756-C764, C758-C775, C778-C787, C790-C808, C811-C825, C813-C832, C835-C844, C847-C864, C867-C881, C869-C888, C890-C899, C902-C915, C918-C930, C920-C937, C939-C948, C951-C963, C966-C978, C968-C984, C986-C995, and C998-C1011. 6 Laminin EGF-like domains span residues C707 to P755, C756 to I810, C811 to A866, C867 to R917, C918 to P965, and C966 to E1013. N1005, N1041, N1048, N1090, N1144, N1158, N1188, N1206, N1253, N1363, and N1386 each carry an N-linked (GlcNAc...) asparagine glycan. The interval E1013–P1592 is domain II and I. Residues Y1018–N1477 are a coiled coil. Positions N1456 to A1472 are enriched in basic and acidic residues. The interval N1456–S1489 is disordered. The span at S1476–S1489 shows a compositional bias: polar residues. N-linked (GlcNAc...) asparagine glycosylation is found at N1477 and N1487. Residues V1515–L1579 are a coiled coil.

As to quaternary structure, laminin is a complex glycoprotein, consisting of three different polypeptide chains (alpha, beta, gamma), which are bound to each other by disulfide bonds into a cross-shaped molecule comprising one long and three short arms with globules at each end.

Its subcellular location is the secreted. The protein localises to the extracellular space. The protein resides in the extracellular matrix. It is found in the basement membrane. Its function is as follows. Binding to cells via a high affinity receptor, laminin is thought to mediate the attachment, migration and organization of cells into tissues during embryonic development by interacting with other extracellular matrix components. The sequence is that of Laminin subunit gamma-1 (lamc1) from Xenopus tropicalis (Western clawed frog).